The chain runs to 189 residues: Putative ankyrin repeat protein L38 (189 aa).

An ANK repeat occupies 108–137 (YGKTPLITAIKSGNCIMVKKLIDYGADFNK).

This is Putative ankyrin repeat protein L38 from Acanthamoeba polyphaga mimivirus (APMV).